The chain runs to 278 residues: Protein saf1 (278 aa).

Disordered stretches follow at residues 1–43, 81–210, and 240–264; these read MLSK…RNMS, KKNI…DIEE, and QKLA…EDKD. 2 stretches are compositionally biased toward basic and acidic residues: residues 22–38 and 90–103; these read QIKV…ERLS and GRVE…AERQ. Composition is skewed to basic residues over residues 104-116 and 169-183; these read HKPR…KNPK and REKK…HHKK. Over residues 186–202 the composition is skewed to polar residues; the sequence is INASSAQPKSTTTTEAA.

It is found in the nucleus. The protein resides in the nucleolus. In Schizosaccharomyces pombe (strain 972 / ATCC 24843) (Fission yeast), this protein is Protein saf1 (saf1).